We begin with the raw amino-acid sequence, 441 residues long: Membrane-bound protease PH1510 (441 aa).

Residues 1–20 (MRRILLSMIVLIFLASPILA) form the signal peptide. 64–67 (GGRA) contacts substrate. Residue S97 is the Nucleophile of the active site. 119 to 124 (ACRPIL) lines the substrate pocket. K138 acts as the Proton donor/acceptor in catalysis. The next 4 helical transmembrane spans lie at 239-259 (VAYL…LTPG), 271-291 (IILA…ILLI), 307-327 (FGLF…LLFG), and 344-364 (ILII…MAAV).

Belongs to the peptidase S14 family. In terms of assembly, homodimer.

The protein localises to the membrane. Inhibited by divalent metal cations, including Mg(2+), Mn(2+), Ca(2+) and Zn(2+). Mildly inhibited by 0.01 % SDS and 0.1% dodecyl-beta-D-maltoside. Activity is nearly abolished by 1 % SDS. In terms of biological role, protease that cleaves its substrates preferentially near hydrophobic or aromatic amino acid residues. Can degrade casein and the stomatin homolog PH1511 (in vitro). This chain is Membrane-bound protease PH1510, found in Pyrococcus horikoshii (strain ATCC 700860 / DSM 12428 / JCM 9974 / NBRC 100139 / OT-3).